Consider the following 616-residue polypeptide: uncharacterized protein (616 aa).

The protein belongs to the UbiD family.

This is an uncharacterized protein from Helicobacter pylori (strain J99 / ATCC 700824) (Campylobacter pylori J99).